Reading from the N-terminus, the 203-residue chain is MDKAFDEIIGNSHTDSSSNHKVTRYRRRDLRNELGPRLGFAPSDAASRSKDRLYREREEPPLPKRIRISKIPLDVSDYTLDDMIKEFGSPIFSKIFDNKEDRTCIYEFEDPEVLEKIVERYNGHELHNAKIEVEIYQPQRKHSRMNAHNRRKQTAQEQGRGRPGSHYRQRPNRVSKKNKGREKNNTPTSVEALDAELDAYMKG.

At methionine 1 the chain carries N-acetylmethionine. Disordered regions lie at residues 1-60 (MDKA…REEP) and 134-203 (EIYQ…YMKG). Positions 11–20 (NSHTDSSSNH) are enriched in polar residues. Basic and acidic residues predominate over residues 47 to 60 (SRSKDRLYREREEP). The 75-residue stretch at 64-138 (KRIRISKIPL…AKIEVEIYQP (75 aa)) folds into the RRM domain. Basic residues-rich tracts occupy residues 139 to 153 (QRKH…RRKQ) and 163 to 180 (PGSH…KNKG).

Belongs to the YRA1 family. In terms of assembly, associates with mRNPs. Interacts with YRA1.

It localises to the nucleus. Involved in export of poly(A) mRNAs from the nucleus. Recruited to the coding sequences as well as poly-A sites of active genes. This chain is RNA annealing protein YRA2 (YRA2), found in Saccharomyces cerevisiae (strain RM11-1a) (Baker's yeast).